Reading from the N-terminus, the 207-residue chain is ATP-dependent Clp protease proteolytic subunit 2 (207 aa).

Ser-102 serves as the catalytic Nucleophile. The active site involves His-127.

It belongs to the peptidase S14 family. Fourteen ClpP subunits assemble into 2 heptameric rings which stack back to back to give a disk-like structure with a central cavity, resembling the structure of eukaryotic proteasomes.

It is found in the cytoplasm. It catalyses the reaction Hydrolysis of proteins to small peptides in the presence of ATP and magnesium. alpha-casein is the usual test substrate. In the absence of ATP, only oligopeptides shorter than five residues are hydrolyzed (such as succinyl-Leu-Tyr-|-NHMec, and Leu-Tyr-Leu-|-Tyr-Trp, in which cleavage of the -Tyr-|-Leu- and -Tyr-|-Trp bonds also occurs).. Its function is as follows. Cleaves peptides in various proteins in a process that requires ATP hydrolysis. Has a chymotrypsin-like activity. Plays a major role in the degradation of misfolded proteins. In Bifidobacterium longum (strain NCC 2705), this protein is ATP-dependent Clp protease proteolytic subunit 2.